The following is a 462-amino-acid chain: CCA-adding enzyme (462 aa).

Residues S54 and R57 each coordinate ATP. S54 and R57 together coordinate CTP. The Mg(2+) site is built by D66, D68, and D117. Residues H140, K160, and Y169 each contribute to the ATP site. H140, K160, and Y169 together coordinate CTP.

Belongs to the tRNA nucleotidyltransferase/poly(A) polymerase family. Archaeal CCA-adding enzyme subfamily. Homodimer. It depends on Mg(2+) as a cofactor.

It catalyses the reaction a tRNA precursor + 2 CTP + ATP = a tRNA with a 3' CCA end + 3 diphosphate. The enzyme catalyses a tRNA with a 3' CCA end + 2 CTP + ATP = a tRNA with a 3' CCACCA end + 3 diphosphate. Functionally, catalyzes the addition and repair of the essential 3'-terminal CCA sequence in tRNAs without using a nucleic acid template. Adds these three nucleotides in the order of C, C, and A to the tRNA nucleotide-73, using CTP and ATP as substrates and producing inorganic pyrophosphate. tRNA 3'-terminal CCA addition is required both for tRNA processing and repair. Also involved in tRNA surveillance by mediating tandem CCA addition to generate a CCACCA at the 3' terminus of unstable tRNAs. While stable tRNAs receive only 3'-terminal CCA, unstable tRNAs are marked with CCACCA and rapidly degraded. The protein is CCA-adding enzyme of Halorubrum lacusprofundi (strain ATCC 49239 / DSM 5036 / JCM 8891 / ACAM 34).